Consider the following 375-residue polypeptide: MTLQATPLNAIHRALGARMVDFGGWDMPVNYGSQIEEHHAVRNDAGMFDVSHMCVVDLAGPNTRAFLRGLLANNVDKLQTPGKALYSCMLDEHGGVIDDLIVYFFAEDRFRLVVNAGTAVGDIDWIRARNEATGSGVTITPRREDVAPAGVPPLAIVAVQGPNARAKVWSTFPSTQPSDALKPFNAVVVQDPALGEVMVARTGYTGEDGFELVVPAASVAGLWEKLQAAGVRPAGLGARDTLRLEAGMNLYGQDMDIKVSPLDAGLAWTVDLQSERDFTGKAALAAAGSRQQFLGLILRDKGGVLRAHQKVITPAGDGEITSGTFSPSLSQSIAFARLPQGVNVGDTVQVEIRDRKLNATVVKLPFVRHGKALVS.

It belongs to the GcvT family. The glycine cleavage system is composed of four proteins: P, T, L and H.

It catalyses the reaction N(6)-[(R)-S(8)-aminomethyldihydrolipoyl]-L-lysyl-[protein] + (6S)-5,6,7,8-tetrahydrofolate = N(6)-[(R)-dihydrolipoyl]-L-lysyl-[protein] + (6R)-5,10-methylene-5,6,7,8-tetrahydrofolate + NH4(+). Functionally, the glycine cleavage system catalyzes the degradation of glycine. The protein is Aminomethyltransferase of Cupriavidus taiwanensis (strain DSM 17343 / BCRC 17206 / CCUG 44338 / CIP 107171 / LMG 19424 / R1) (Ralstonia taiwanensis (strain LMG 19424)).